The chain runs to 465 residues: MNRLPNSASALACTAHALNLIEKRTLTHEEMKALNREVHDYFEQHVNPGFLEYRKSVTAGGDYGAVEWQAGGLNTLVDTQGQEFLDCLGGFGIFNVGHRNPVVVSAVENQLAKQPLHSQELLDPLRAMLAKTLAALTPGKLKYSFFCNSGTESVEAAIKLAKAYQSPRGKFTFVAASGAFHGKSLGALSATAKAAFRKPFMPLLPGFRHVPFGNIDALRELLGECKKTGDDVAAVILEPIQGEGGVILPPSGYLPAVRKLCDEYGALLIFDEVQTGMGRTGKMFACEHENVQPDILCLAKALGGGVMPIGATVATEEVFSVLFDNPFLHTTTFGGNPLACAAALATIHVLLEENLPAQAEQKGDMLLDGFRQLAREYPHLVQEARGRGMLMAIEFVDNETGYRFASEMFRQRVLVAGTLNNAKTIRIEPPLTLTIEQCEQVLTAARRALETLSTAQSTTAVATES.

Pyridoxal 5'-phosphate contacts are provided by residues 150-151 and glutamine 274; that span reads GT. Residue lysine 300 is modified to N6-(pyridoxal phosphate)lysine. Threonine 332 is a binding site for pyridoxal 5'-phosphate.

The protein belongs to the class-III pyridoxal-phosphate-dependent aminotransferase family. Putrescine aminotransferase subfamily. Pyridoxal 5'-phosphate serves as cofactor.

It carries out the reaction an alkane-alpha,omega-diamine + 2-oxoglutarate = an omega-aminoaldehyde + L-glutamate. The catalysed reaction is putrescine + 2-oxoglutarate = 1-pyrroline + L-glutamate + H2O. It catalyses the reaction cadaverine + 2-oxoglutarate = 5-aminopentanal + L-glutamate. Its pathway is amine and polyamine degradation; putrescine degradation; 4-aminobutanal from putrescine (transaminase route): step 1/1. Its function is as follows. Catalyzes the aminotransferase reaction from putrescine to 2-oxoglutarate, leading to glutamate and 4-aminobutanal, which spontaneously cyclizes to form 1-pyrroline. This is the first step in one of two pathways for putrescine degradation, where putrescine is converted into 4-aminobutanoate (gamma-aminobutyrate or GABA) via 4-aminobutanal. Also functions as a cadaverine transaminase in a a L-lysine degradation pathway to succinate that proceeds via cadaverine, glutarate and L-2-hydroxyglutarate. This Cronobacter sakazakii (strain ATCC BAA-894) (Enterobacter sakazakii) protein is Putrescine aminotransferase.